The following is a 622-amino-acid chain: Polypeptide N-acetylgalactosaminyltransferase 6 (622 aa).

The Cytoplasmic segment spans residues 1-8; sequence MRLLRRRH. Residues 9–28 traverse the membrane as a helical; Signal-anchor for type II membrane protein segment; it reads MAVRLVMVGSAFVLFLFILQ. The Lumenal portion of the chain corresponds to 29–622; the sequence is RDVSGREQAT…SDPHQHWLFI (594 aa). The N-linked (GlcNAc...) asparagine glycan is linked to asparagine 86. The segment at 103 to 135 is disordered; the sequence is WERPPQDPNGPGADGKAFQKKEWTPQETQEKEE. The segment covering 119 to 135 has biased composition (basic and acidic residues); sequence AFQKKEWTPQETQEKEE. Positions 176-285 are catalytic subdomain A; it reads LPATSVIIVF…HGWLEPLLAR (110 aa). Aspartate 269, histidine 271, and histidine 407 together coordinate Mn(2+). The segment at 348–410 is catalytic subdomain B; that stretch reads PIKSPTFAGG…PCSVVGHVFR (63 aa). Residue asparagine 476 is glycosylated (N-linked (GlcNAc...) asparagine). The Ricin B-type lectin domain maps to 507-622; it reads DHCLDVGENN…SDPHQHWLFI (116 aa). Cysteines 509 and 527 form a disulfide. Residues aspartate 511, glutamate 514, histidine 528, and asparagine 533 each contribute to the UDP-N-acetyl-alpha-D-galactosamine site. 2 disulfide bridges follow: cysteine 553/cysteine 566 and cysteine 597/cysteine 610.

Belongs to the glycosyltransferase 2 family. GalNAc-T subfamily. Mn(2+) is required as a cofactor.

Its subcellular location is the golgi apparatus membrane. It carries out the reaction L-seryl-[protein] + UDP-N-acetyl-alpha-D-galactosamine = a 3-O-[N-acetyl-alpha-D-galactosaminyl]-L-seryl-[protein] + UDP + H(+). It catalyses the reaction L-threonyl-[protein] + UDP-N-acetyl-alpha-D-galactosamine = a 3-O-[N-acetyl-alpha-D-galactosaminyl]-L-threonyl-[protein] + UDP + H(+). It functions in the pathway protein modification; protein glycosylation. Its function is as follows. Catalyzes the initial reaction in O-linked oligosaccharide biosynthesis, the transfer of an N-acetyl-D-galactosamine residue to a serine or threonine residue on the protein receptor. May participate in synthesis of oncofetal fibronectin. Has activity toward MUC1A, MUC2, EA2 and fibronectin peptides. The protein is Polypeptide N-acetylgalactosaminyltransferase 6 (GALNT6) of Bos taurus (Bovine).